A 433-amino-acid polypeptide reads, in one-letter code: Xylose isomerase (433 aa).

Catalysis depends on residues His97 and Asp100. Mg(2+) is bound by residues Glu228, Glu264, His267, Asp292, Asp303, Asp305, and Asp334.

It belongs to the xylose isomerase family. In terms of assembly, homotetramer. Mg(2+) is required as a cofactor.

It is found in the cytoplasm. It catalyses the reaction alpha-D-xylose = alpha-D-xylulofuranose. The chain is Xylose isomerase from Fervidobacterium gondwanense.